The following is a 258-amino-acid chain: uncharacterized protein (258 aa).

The first 19 residues, 1–19 (MVGILPLCCSGCVPSLCCS), serve as a signal peptide directing secretion. 3 helical membrane-spanning segments follow: residues 94-114 (GLLL…NWTG), 197-217 (CLIL…LPYI), and 219-239 (PGLS…SSLV).

It localises to the membrane. This is an uncharacterized protein from Homo sapiens (Human).